We begin with the raw amino-acid sequence, 136 residues long: Lymphocyte antigen 6E (136 aa).

A signal peptide spans 1–26 (MSATSNMRVFLPVLLAALLGMEQVHS). One can recognise a UPAR/Ly6 domain in the interval 27–118 (LMCFSCTDQK…AGLGLRASIP (92 aa)). Intrachain disulfides connect cysteine 29–cysteine 54, cysteine 32–cysteine 41, cysteine 47–cysteine 76, cysteine 80–cysteine 98, and cysteine 99–cysteine 104. N-linked (GlcNAc...) asparagine glycosylation is present at asparagine 105. A lipid anchor (GPI-anchor amidated alanine) is attached at alanine 108. Residues 109–136 (AGLGLRASIPLLGLGLLLSLLALLQLSP) constitute a propeptide, removed in mature form.

In terms of assembly, interacts with CHRNA4. Interacts with CD3Z/CD247. Ubiquitously expressed in mouse adult tissues with maximal expression in the lung and the salivary gland. Expression is strikingly lower in the fetal tissues except for the placenta. Present in thymus where its expression is observed in immature thymocytes and thymic stromal cells. Also found on functionally active T-cells as well as B-cells and thymic dendritic cells.

The protein resides in the cell membrane. Functionally, GPI-anchored cell surface protein that regulates T-lymphocytes proliferation, differentiation, and activation. Regulates the T-cell receptor (TCR) signaling by interacting with component CD3Z/CD247 at the plasma membrane, leading to CD3Z/CD247 phosphorylation modulation. Restricts the entry of murine coronavirus, mouse hepatitis virus, by interfering with spike protein-mediated membrane fusion. Also plays an essential role in placenta formation by acting as the main receptor for syncytin-A (SynA). Therefore, participates in the normal fusion of syncytiotrophoblast layer I (SynT-I) and in the proper morphogenesis of both fetal and maternal vasculatures within the placenta. May also act as a modulator of nicotinic acetylcholine receptors (nAChRs) activity. In vitro inhibits alpha-3:beta-4-containing nAChRs maximum response. The chain is Lymphocyte antigen 6E from Mus musculus (Mouse).